The primary structure comprises 259 residues: uncharacterized protein (259 aa).

Positions 51-173 constitute an HD domain; the sequence is GKTHAKIVAN…IAVADGTDMT (123 aa).

This is an uncharacterized protein from Methanocaldococcus jannaschii (strain ATCC 43067 / DSM 2661 / JAL-1 / JCM 10045 / NBRC 100440) (Methanococcus jannaschii).